A 175-amino-acid chain; its full sequence is uncharacterized protein (175 aa).

A compositionally biased stretch (polar residues) spans 1–10 (MSKKINNNKT). The disordered stretch occupies residues 1–21 (MSKKINNNKTPRNKVKNNNVS).

This is an uncharacterized protein from Ureaplasma parvum serovar 3 (strain ATCC 700970).